A 174-amino-acid chain; its full sequence is Protein VdlD (174 aa).

Residues 20–132 (DRTKLLMSYL…YFTMVAVENG (113 aa)) form the HotDog ACOT-type domain.

It belongs to the acyl coenzyme A hydrolase family.

The chain is Protein VdlD (vdlD) from Helicobacter pylori (strain J99 / ATCC 700824) (Campylobacter pylori J99).